The primary structure comprises 346 residues: Porin Omp2a (346 aa).

Residues 1–22 (MNIKSLLLGSAAALVAASGAQA) form the signal peptide.

This sequence belongs to the alphaproteobacteria porin family. Monomer.

It is found in the cell outer membrane. In terms of biological role, forms passive diffusion pores that allow small molecular weight hydrophilic materials across the outer membrane. In Brucella ovis, this protein is Porin Omp2a (omp2a).